The chain runs to 715 residues: Fatty acid oxidation complex subunit alpha (715 aa).

The tract at residues 1–190 is enoyl-CoA hydratase; the sequence is MTTTSAFMLN…KAGLVDDVVP (190 aa). The tract at residues 306–714 is 3-hydroxyacyl-CoA dehydrogenase; sequence GPLNSVGILG…FWTNGETDQG (409 aa).

The protein in the N-terminal section; belongs to the enoyl-CoA hydratase/isomerase family. It in the central section; belongs to the 3-hydroxyacyl-CoA dehydrogenase family. Heterotetramer of two alpha chains (FadJ) and two beta chains (FadI).

The protein resides in the cytoplasm. It carries out the reaction a (3S)-3-hydroxyacyl-CoA = a (2E)-enoyl-CoA + H2O. The catalysed reaction is a 4-saturated-(3S)-3-hydroxyacyl-CoA = a (3E)-enoyl-CoA + H2O. It catalyses the reaction a (3S)-3-hydroxyacyl-CoA + NAD(+) = a 3-oxoacyl-CoA + NADH + H(+). The enzyme catalyses (3S)-3-hydroxybutanoyl-CoA = (3R)-3-hydroxybutanoyl-CoA. Its pathway is lipid metabolism; fatty acid beta-oxidation. Catalyzes the formation of a hydroxyacyl-CoA by addition of water on enoyl-CoA. Also exhibits 3-hydroxyacyl-CoA epimerase and 3-hydroxyacyl-CoA dehydrogenase activities. This chain is Fatty acid oxidation complex subunit alpha, found in Salmonella typhimurium (strain LT2 / SGSC1412 / ATCC 700720).